Reading from the N-terminus, the 173-residue chain is Pyridoxal 5'-phosphate synthase subunit PdxT (173 aa).

49 to 51 (GES) contacts L-glutamine. The active-site Nucleophile is the C81. L-glutamine-binding positions include R113 and 141 to 142 (IR).

The protein belongs to the glutaminase PdxT/SNO family. In the presence of PdxS, forms a dodecamer of heterodimers. Only shows activity in the heterodimer.

The catalysed reaction is aldehydo-D-ribose 5-phosphate + D-glyceraldehyde 3-phosphate + L-glutamine = pyridoxal 5'-phosphate + L-glutamate + phosphate + 3 H2O + H(+). The enzyme catalyses L-glutamine + H2O = L-glutamate + NH4(+). Its pathway is cofactor biosynthesis; pyridoxal 5'-phosphate biosynthesis. Its function is as follows. Catalyzes the hydrolysis of glutamine to glutamate and ammonia as part of the biosynthesis of pyridoxal 5'-phosphate. The resulting ammonia molecule is channeled to the active site of PdxS. This Mycolicibacterium paratuberculosis (strain ATCC BAA-968 / K-10) (Mycobacterium paratuberculosis) protein is Pyridoxal 5'-phosphate synthase subunit PdxT.